A 554-amino-acid chain; its full sequence is uncharacterized protein (554 aa).

This is an uncharacterized protein from Saccharomyces cerevisiae (strain ATCC 204508 / S288c) (Baker's yeast).